A 268-amino-acid polypeptide reads, in one-letter code: Nitrite transporter NirC (268 aa).

The Cytoplasmic portion of the chain corresponds to 1–25 (MFTDTINKCAANAARIARLSANNPL). Residues 26–46 (GFWVSSAMAGAYVGLGIILIF) traverse the membrane as a helical segment. At 47 to 59 (TLGNLLDPSVRPL) the chain is on the periplasmic side. Residues 60 to 80 (VMGATFGIALTLVIIAGSELF) form a helical membrane-spanning segment. At 81 to 112 (TGHTMFLTFGVKAGSISHGQMWAILPQTWLGN) the chain is on the cytoplasmic side. Residues 113 to 133 (LVGSVFVAMLYSWGGGSLLPV) traverse the membrane as a helical segment. Residues 134–151 (DTSIVHSVALAKTTAPAM) lie on the Periplasmic side of the membrane. Residues 152–172 (VLFFKGALCNWLVCLAIWMAL) form a helical membrane-spanning segment. Over 173 to 179 (RTEGAAK) the chain is Cytoplasmic. Residues 180–200 (FIAIWWCLLAFIASGYEHSIA) form a helical membrane-spanning segment. Residues 201–225 (NMTLFALSWFGNHSEAYTLAGIGHN) are Periplasmic-facing. A helical transmembrane segment spans residues 226 to 246 (LLWVTLGNTLSGAVFMGLGYW). The Cytoplasmic segment spans residues 247-268 (YATPKANRPVADKFNQTETAAG).

This sequence belongs to the FNT transporter (TC 1.A.16) family.

It localises to the cell inner membrane. Its function is as follows. Catalyzes nitrite uptake and nitrite export across the cytoplasmic membrane. Is up to 10-fold more active than NarK or NarU in nitrite uptake for subsequent reduction in the cytoplasm by the NirB/NirD nitrite reductase. This Escherichia coli (strain K12) protein is Nitrite transporter NirC (nirC).